Consider the following 364-residue polypeptide: Chaperone protein DnaJ (364 aa).

Positions 4–69 (DYYEILGLSK…NKKAKYDRFG (66 aa)) constitute a J domain. Residues 135-213 (GYKNNINITR…CKGKGSLTKQ (79 aa)) form a CR-type zinc finger. Zn(2+) is bound by residues Cys148, Cys151, Cys165, Cys168, Cys187, Cys190, Cys201, and Cys204. CXXCXGXG motif repeat units follow at residues 148 to 155 (CDSCLGKK), 165 to 172 (CNMCNGSG), 187 to 194 (CSKCYGEG), and 201 to 208 (CKSCKGKG).

Belongs to the DnaJ family. In terms of assembly, homodimer. The cofactor is Zn(2+).

The protein resides in the cytoplasm. Participates actively in the response to hyperosmotic and heat shock by preventing the aggregation of stress-denatured proteins and by disaggregating proteins, also in an autonomous, DnaK-independent fashion. Unfolded proteins bind initially to DnaJ; upon interaction with the DnaJ-bound protein, DnaK hydrolyzes its bound ATP, resulting in the formation of a stable complex. GrpE releases ADP from DnaK; ATP binding to DnaK triggers the release of the substrate protein, thus completing the reaction cycle. Several rounds of ATP-dependent interactions between DnaJ, DnaK and GrpE are required for fully efficient folding. Also involved, together with DnaK and GrpE, in the DNA replication of plasmids through activation of initiation proteins. The sequence is that of Chaperone protein DnaJ from Borreliella burgdorferi (strain ATCC 35210 / DSM 4680 / CIP 102532 / B31) (Borrelia burgdorferi).